A 130-amino-acid polypeptide reads, in one-letter code: Small ribosomal subunit protein uS9 (130 aa).

The protein belongs to the universal ribosomal protein uS9 family.

In Brevibacillus brevis (strain 47 / JCM 6285 / NBRC 100599), this protein is Small ribosomal subunit protein uS9.